Here is a 145-residue protein sequence, read N- to C-terminus: uncharacterized protein (145 aa).

Residues 71 to 95 (GARGRGRTYTKGGSSRSPASWAEQG) form a disordered region.

This is an uncharacterized protein from Homo sapiens (Human).